The chain runs to 561 residues: FAD-binding monooxygenase tazF (561 aa).

Residues 74 to 77 (TWLD), 86 to 87 (DI), and Tyr-92 contribute to the FAD site. 84 to 86 (GCD) serves as a coordination point for NADP(+). NADP(+)-binding positions include 212-218 (NGSSALQ) and 235-236 (RH).

Belongs to the FAD-binding monooxygenase family. Requires FAD as cofactor.

The protein operates within secondary metabolite biosynthesis. In terms of biological role, FAD-binding monooxygenase; part of the gene cluster that mediates the biosynthesis of azaterrilone A and other azaphilones, a class of fungal metabolites characterized by a highly oxygenated pyrano-quinone bicyclic core and exhibiting a broad range of bioactivities. The first step of the pathway begins with the non-reducing polyketide synthase tazA that assembles one acetyl-CoA starter unit, five malonyl-CoA units, and catalyzes a series of Claisen condensations, methylation, PT-mediated cyclization, and finally releases the first hexaketide precursor through the R-domain. The tazA product then undergoes reduction on its terminal ketone and the following pyran-ring formation by yet undetermined enzyme(s). Dehydration and enoyl reduction, possibly involving the trans-enoyl reductase tazE leads to the next intermediate. TazD is predicted as an acetyltransferase and might catalyze the acetylation steps leading to the synthesis of azaterrilone A. Azaterrilone A is not the final product of the taz pathway and both the highly reducing polyketide synthase tazB and the dual enzyme tazHJ catalyze late steps of the pathway, leading to the production of the 2 final stereoisomers that contain additional polyketide modification whose structures have still to be determined. This chain is FAD-binding monooxygenase tazF, found in Aspergillus terreus (strain NIH 2624 / FGSC A1156).